The following is a 146-amino-acid chain: Hemoglobin cathodic subunit beta (146 aa).

One can recognise a Globin domain in the interval 2–146; sequence HFSDAERDAI…VAAALSSRYF (145 aa). Heme b is bound by residues histidine 63 and histidine 92.

This sequence belongs to the globin family. As to quaternary structure, heterotetramer of two alpha chains and two beta chains. In terms of tissue distribution, red blood cells.

Involved in oxygen transport from gills to the various peripheral tissues. The sequence is that of Hemoglobin cathodic subunit beta (hbb) from Hoplosternum littorale (Hassar).